The sequence spans 372 residues: tRNA-specific 2-thiouridylase MnmA (372 aa).

ATP-binding positions include 16-23 and Met42; that span reads GMSGGVDS. Positions 102-104 are interaction with target base in tRNA; that stretch reads NPD. Cys107 (nucleophile) is an active-site residue. Residues Cys107 and Cys205 are joined by a disulfide bond. Gly132 is an ATP binding site. Positions 155-157 are interaction with tRNA; that stretch reads KDQ. The Cysteine persulfide intermediate role is filled by Cys205. The interval 317-318 is interaction with tRNA; it reads RY.

Belongs to the MnmA/TRMU family.

It localises to the cytoplasm. It catalyses the reaction S-sulfanyl-L-cysteinyl-[protein] + uridine(34) in tRNA + AH2 + ATP = 2-thiouridine(34) in tRNA + L-cysteinyl-[protein] + A + AMP + diphosphate + H(+). Functionally, catalyzes the 2-thiolation of uridine at the wobble position (U34) of tRNA, leading to the formation of s(2)U34. The polypeptide is tRNA-specific 2-thiouridylase MnmA (Shewanella baltica (strain OS223)).